The sequence spans 216 residues: 3-keto-L-gulonate-6-phosphate decarboxylase UlaD (216 aa).

Asp11 provides a ligand contact to substrate. Mg(2+)-binding residues include Glu33 and Asp62. Arg192 contacts substrate.

The protein belongs to the HPS/KGPDC family. KGPDC subfamily. Homodimer. It depends on Mg(2+) as a cofactor.

It catalyses the reaction 3-dehydro-L-gulonate 6-phosphate + H(+) = L-xylulose 5-phosphate + CO2. The protein operates within cofactor degradation; L-ascorbate degradation; D-xylulose 5-phosphate from L-ascorbate: step 2/4. Its function is as follows. Catalyzes the decarboxylation of 3-keto-L-gulonate-6-P into L-xylulose-5-P. Is involved in the anaerobic L-ascorbate utilization. The polypeptide is 3-keto-L-gulonate-6-phosphate decarboxylase UlaD (Escherichia coli O17:K52:H18 (strain UMN026 / ExPEC)).